The primary structure comprises 1073 residues: uncharacterized protein (1073 aa).

The signal sequence occupies residues 1 to 36 (MAEIIHHSNVFTWAFHVSEYDGAPLLLLGSFSSVAS). N-linked (GlcNAc...) asparagine glycosylation occurs at Asn132. Residue 392–399 (ATAGIGKS) coordinates ATP. Asn544, Asn632, Asn703, Asn732, and Asn953 each carry an N-linked (GlcNAc...) asparagine glycan.

This is an uncharacterized protein from Schizosaccharomyces pombe (strain 972 / ATCC 24843) (Fission yeast).